The following is a 327-amino-acid chain: UPF0665 family protein C23C4.06c (327 aa).

It belongs to the UPF0665 family.

The protein localises to the cytoplasm. Its subcellular location is the nucleus. The chain is UPF0665 family protein C23C4.06c from Schizosaccharomyces pombe (strain 972 / ATCC 24843) (Fission yeast).